Reading from the N-terminus, the 428-residue chain is 3-phosphoshikimate 1-carboxyvinyltransferase (428 aa).

Lysine 22, serine 23, and arginine 27 together coordinate 3-phosphoshikimate. Lysine 22 lines the phosphoenolpyruvate pocket. Residues glycine 96 and arginine 124 each coordinate phosphoenolpyruvate. The 3-phosphoshikimate site is built by serine 169, serine 170, glutamine 171, serine 197, aspartate 313, asparagine 336, and lysine 340. Glutamine 171 contacts phosphoenolpyruvate. Aspartate 313 serves as the catalytic Proton acceptor. Phosphoenolpyruvate-binding residues include arginine 344, arginine 386, and lysine 411.

The protein belongs to the EPSP synthase family. Monomer.

It is found in the cytoplasm. The catalysed reaction is 3-phosphoshikimate + phosphoenolpyruvate = 5-O-(1-carboxyvinyl)-3-phosphoshikimate + phosphate. Its pathway is metabolic intermediate biosynthesis; chorismate biosynthesis; chorismate from D-erythrose 4-phosphate and phosphoenolpyruvate: step 6/7. Functionally, catalyzes the transfer of the enolpyruvyl moiety of phosphoenolpyruvate (PEP) to the 5-hydroxyl of shikimate-3-phosphate (S3P) to produce enolpyruvyl shikimate-3-phosphate and inorganic phosphate. This Xenorhabdus nematophila (strain ATCC 19061 / DSM 3370 / CCUG 14189 / LMG 1036 / NCIMB 9965 / AN6) protein is 3-phosphoshikimate 1-carboxyvinyltransferase.